Consider the following 577-residue polypeptide: Moesin (577 aa).

The FERM domain maps to proline 2–arginine 295. Serine 74 is subject to Phosphoserine. Lysine 79 is modified (N6-acetyllysine). Residue lysine 83 is modified to N6-succinyllysine. Positions isoleucine 115 to glutamate 120 match the [IL]-x-C-x-x-[DE] motif motif. Tyrosine 116 is subject to Phosphotyrosine. The residue at position 117 (cysteine 117) is an S-nitrosocysteine. Residues lysine 139 and lysine 165 each carry the N6-acetyllysine modification. Residues glutamate 376–glutamine 414 are compositionally biased toward basic and acidic residues. 2 disordered regions span residues glutamate 376–glutamate 415 and alanine 434–valine 518. Serine 407 is modified (phosphoserine). The segment covering alanine 476–glycine 487 has biased composition (acidic residues). Over residues alanine 492–valine 518 the composition is skewed to basic and acidic residues. Residue serine 527 is modified to Phosphoserine. Threonine 558 carries the post-translational modification Phosphothreonine; by ROCK2 and STK10.

As to quaternary structure, binds NHERF1. In resting T-cells, part of a PAG1-NHERF1-MSN complex which is disrupted upon TCR activation. Interacts with PPP1R16B. Interacts with PDZD8. Interacts with SELPLG and SYK; mediates the activation of SYK by SELPLG. Interacts with PDPN (via cytoplasmic domain); activates RHOA and promotes epithelial-mesenchymal transition. Interacts with SPN/CD43 cytoplasmic tail, CD44 and ICAM2. Phosphorylation on Thr-558 is crucial for the formation of microvilli-like structures. Phosphorylation by ROCK2 suppresses the head-to-tail association of the N-terminal and C-terminal halves resulting in an opened conformation which is capable of actin and membrane-binding. Phosphorylation on Thr-558 by STK10 negatively regulates lymphocyte migration and polarization. In terms of processing, S-nitrosylation of Cys-117 is induced by interferon-gamma and oxidatively-modified low-densitity lipoprotein (LDL(ox)) implicating the iNOS-S100A8/9 transnitrosylase complex.

The protein resides in the cell membrane. The protein localises to the cytoplasm. It is found in the cytoskeleton. It localises to the apical cell membrane. Its subcellular location is the cell projection. The protein resides in the microvillus membrane. The protein localises to the microvillus. Its activity is regulated as follows. A head-to-tail association, of the N-terminal and C-terminal halves results in a closed conformation (inactive form) which is incapable of actin or membrane-binding. Functionally, probably involved in connections of major cytoskeletal structures to the plasma membrane. Plays a role in regulating the proliferation, migration, and adhesion of human lymphoid cells and participates in immunologic synapse formation. The chain is Moesin from Sus scrofa (Pig).